A 562-amino-acid polypeptide reads, in one-letter code: Oxygen-dependent choline dehydrogenase (562 aa).

4-33 (DYIIIGAGSAGNVLATRLTEDPNTSVLLLE) contacts FAD. His473 functions as the Proton acceptor in the catalytic mechanism.

This sequence belongs to the GMC oxidoreductase family. It depends on FAD as a cofactor.

The protein resides in the cell membrane. The enzyme catalyses choline + A = betaine aldehyde + AH2. It carries out the reaction betaine aldehyde + NAD(+) + H2O = glycine betaine + NADH + 2 H(+). It functions in the pathway amine and polyamine biosynthesis; betaine biosynthesis via choline pathway; betaine aldehyde from choline (cytochrome c reductase route): step 1/1. In terms of biological role, involved in the biosynthesis of the osmoprotectant glycine betaine. Catalyzes the oxidation of choline to betaine aldehyde and betaine aldehyde to glycine betaine at the same rate. In Escherichia coli O157:H7, this protein is Oxygen-dependent choline dehydrogenase.